A 1065-amino-acid polypeptide reads, in one-letter code: MDPIIQTIQLFQHTLHHDANVIKAAEAQLQQIKVTDGYSRILLKILASNEVDISIRQGVSIFLKNMIITKWRGAEDESPITQEDAEFIKENLIDLLVHSHHLVQNQIEAMIEIIANRDFPEKWTSLLPKSIQYINTQDVKLILAGLTSIQLGIKRFRYVTMGDKKKELLYTIVNEIFPLLLQILEFLSQHQTIESALMQKKVIKIFGYAIHFEIPDLLIQPEVFNKWLSQFVRIIQRPITPQENVKHADDCRKNQWWLLKRTTAKLLNLLFRKSATSVRSTDHSSVKALNKLFMPVYSVEVMKVFYEQLSTLEQLYKGVHYERYQQKLIEYFSFAIKYGVTYVAMKPWLSTLIQQVLFPIICFNDRDAELWECDPNEFLRSQFESSMTFATARIEVLNFIIDVVGKRGRANLDMIMGFCIQSLNKYNAATNASEKNPREKDGVLVIISVLSAYLKNISFYKSNLEQMLLLHVFPELSSPHGFLKARACSLFSEFYNIEFTDPVYFSNALKLILGLMSDNDLPVRVKAGTSICNLVRANQGVDELRPILPQLLDKIFSLLSEAESEDLVIAIESIIQRFKHEIAPYAVNLCKNLSEQFLRLLELEESDESGESGFASQECLGVYCTLLRALKDIPDVFNSLEQQIVPILQKLFTSDHMMYLDEALRILTFVTYYPKSISPLVWSLFPQIMNLFDECACDFASSYVNPLDNYISYGTEYFLSNQQYIEMVFNMYKKMVGDINQQPVDAGDCCKIMESLIQRAKGRIDYMIVPVLELACGRLLNTDKNNQKSKEFTVYLLEIIANCIYYNPLISTQYLESKNLVEPIFGLWFNRIKHFQRFYDKKISVLAFSSLLTLNPSPNFVKFGTSLILEKMLQFTKDMLSIEKELDKQEAEREQKIKDGTLKPEEEEFIDENDEEDYFDNHKFEFEFTEIPDNQDCQHDDEGEVFLDDIEKATEYFENGGDLGEDEGDNFDDQNDDDDQDSEEDLFEDEDTPDFETPIDEVDGFEFMINSIQNFFQINPTCIQQISEKQQEKIKKYVASAPARKEKLRLEKEKEEKLKQQQQKK.

Residues 25 to 98 (AEAQLQQIKV…KENLIDLLVH (74 aa)) form the Importin N-terminal domain. Residues 958 to 996 (ENGGDLGEDEGDNFDDQNDDDDQDSEEDLFEDEDTPDFE) are disordered. Residues 963-996 (LGEDEGDNFDDQNDDDDQDSEEDLFEDEDTPDFE) show a composition bias toward acidic residues.

Belongs to the importin beta family.

Its subcellular location is the cytoplasm. The protein resides in the nucleus. In terms of biological role, may function in nuclear protein import. The protein is Probable importin-7 homolog of Dictyostelium discoideum (Social amoeba).